The sequence spans 185 residues: Ribosome-recycling factor (185 aa).

This sequence belongs to the RRF family.

The protein localises to the cytoplasm. In terms of biological role, responsible for the release of ribosomes from messenger RNA at the termination of protein biosynthesis. May increase the efficiency of translation by recycling ribosomes from one round of translation to another. The chain is Ribosome-recycling factor from Aeromonas hydrophila subsp. hydrophila (strain ATCC 7966 / DSM 30187 / BCRC 13018 / CCUG 14551 / JCM 1027 / KCTC 2358 / NCIMB 9240 / NCTC 8049).